The sequence spans 173 residues: RTX-III toxin-activating lysine-acyltransferase ApxIIC (173 aa).

Catalysis depends on residues H29 and D98.

This sequence belongs to the RTX toxin acyltransferase family. Homodimer.

It localises to the cytoplasm. The catalysed reaction is a fatty acyl-[ACP] + L-lysyl-[protein] = N(6)-(fatty acyl)-L-lysyl-[protein] + holo-[ACP] + H(+). Functionally, protein-lysine acyltransferase that catalyzes fatty acylation of the protoxin, thereby converting it to the active toxin. The sequence is that of RTX-III toxin-activating lysine-acyltransferase ApxIIC (apxIIIC) from Actinobacillus pleuropneumoniae (Haemophilus pleuropneumoniae).